The following is a 428-amino-acid chain: Adenylosuccinate synthetase (428 aa).

Residues 12–18 (GDEGKGK) and 40–42 (GHT) each bind GTP. D13 functions as the Proton acceptor in the catalytic mechanism. Residues D13 and G40 each contribute to the Mg(2+) site. IMP-binding positions include 13 to 16 (DEGK), 38 to 41 (NAGH), T128, R142, Q223, T238, and R302. H41 functions as the Proton donor in the catalytic mechanism. 298–304 (VTTKRPR) lines the substrate pocket. Residues R304, 330–332 (KLD), and 412–414 (GVG) contribute to the GTP site.

This sequence belongs to the adenylosuccinate synthetase family. Homodimer. Requires Mg(2+) as cofactor.

It is found in the cytoplasm. The catalysed reaction is IMP + L-aspartate + GTP = N(6)-(1,2-dicarboxyethyl)-AMP + GDP + phosphate + 2 H(+). It functions in the pathway purine metabolism; AMP biosynthesis via de novo pathway; AMP from IMP: step 1/2. Functionally, plays an important role in the de novo pathway of purine nucleotide biosynthesis. Catalyzes the first committed step in the biosynthesis of AMP from IMP. The protein is Adenylosuccinate synthetase of Cutibacterium acnes (strain DSM 16379 / KPA171202) (Propionibacterium acnes).